The following is a 252-amino-acid chain: 3-dehydroquinate dehydratase (252 aa).

Residues 47 to 49 (EWR) and Arg-83 contribute to the 3-dehydroquinate site. His-144 (proton donor/acceptor) is an active-site residue. The active-site Schiff-base intermediate with substrate is the Lys-171. 3-dehydroquinate is bound by residues Arg-213, Ser-232, and Gln-236.

This sequence belongs to the type-I 3-dehydroquinase family. As to quaternary structure, homodimer.

It catalyses the reaction 3-dehydroquinate = 3-dehydroshikimate + H2O. It functions in the pathway metabolic intermediate biosynthesis; chorismate biosynthesis; chorismate from D-erythrose 4-phosphate and phosphoenolpyruvate: step 3/7. Functionally, involved in the third step of the chorismate pathway, which leads to the biosynthesis of aromatic amino acids. Catalyzes the cis-dehydration of 3-dehydroquinate (DHQ) and introduces the first double bond of the aromatic ring to yield 3-dehydroshikimate. This is 3-dehydroquinate dehydratase from Lactiplantibacillus plantarum (strain ATCC BAA-793 / NCIMB 8826 / WCFS1) (Lactobacillus plantarum).